We begin with the raw amino-acid sequence, 266 residues long: 2-Cys peroxiredoxin BAS1, chloroplastic (266 aa).

Residues 1 to 16 (MASVASSTTLISSPSS) are compositionally biased toward low complexity. The tract at residues 1–25 (MASVASSTTLISSPSSRVFPAKSSL) is disordered. The N-terminal 65 residues, 1–65 (MASVASSTTL…SSTSRRSFAV (65 aa)), are a transit peptide targeting the chloroplast. The 160-residue stretch at 73 to 232 (PLVGNKAPDF…TMRTLQALQY (160 aa)) folds into the Thioredoxin domain. Residue Cys-119 is the Cysteine sulfenic acid (-SOH) intermediate of the active site.

This sequence belongs to the peroxiredoxin family. AhpC/Prx1 subfamily. Homodimer; disulfide-linked, upon oxidation. Interacts with the plastidial thioredoxin CDSP32. Interacts with the plastidial NADPH-dependent thioredoxin reductase ANTR-C.

The protein localises to the plastid. It is found in the chloroplast. It carries out the reaction a hydroperoxide + [thioredoxin]-dithiol = an alcohol + [thioredoxin]-disulfide + H2O. In terms of biological role, thiol-specific peroxidase that catalyzes the reduction of hydrogen peroxide and organic hydroperoxides to water and alcohols, respectively. Plays a role in cell protection against oxidative stress by detoxifying peroxides. May be an antioxidant enzyme particularly in the developing shoot and photosynthesizing leaf. In Arabidopsis thaliana (Mouse-ear cress), this protein is 2-Cys peroxiredoxin BAS1, chloroplastic (BAS1).